The chain runs to 539 residues: GMP synthase [glutamine-hydrolyzing] (539 aa).

The Glutamine amidotransferase type-1 domain maps to 4–203 (KILILDFGSQ…VHDICGCKSD (200 aa)). Cysteine 82 serves as the catalytic Nucleophile. Active-site residues include histidine 177 and glutamate 179. The GMPS ATP-PPase domain maps to 204–395 (WNMPDYIAEA…LGLPHDMVYR (192 aa)). An ATP-binding site is contributed by 231–237 (SGGVDSS).

Homodimer.

The catalysed reaction is XMP + L-glutamine + ATP + H2O = GMP + L-glutamate + AMP + diphosphate + 2 H(+). It functions in the pathway purine metabolism; GMP biosynthesis; GMP from XMP (L-Gln route): step 1/1. Its function is as follows. Catalyzes the synthesis of GMP from XMP. This chain is GMP synthase [glutamine-hydrolyzing], found in Herminiimonas arsenicoxydans.